A 642-amino-acid chain; its full sequence is Hemagglutinin-esterase-fusion glycoprotein (642 aa).

A signal peptide is located at residue Ala-1. A fusion domain-1 region spans residues Glu-2–Tyr-27. Over Glu-2–Ser-617 the chain is Extracellular. Cystine bridges form between Cys-7-Cys-570, Cys-107-Cys-152, Cys-127-Cys-175, Cys-197-Cys-239, Cys-216-Cys-303, Cys-224-Cys-276, and Cys-333-Cys-339. N-linked (GlcNAc...) asparagine; by host glycosylation is found at Asn-13 and Asn-48. The interval Ala-28 to Asn-138 is esterase domain-1. Ser-58 serves as the catalytic Nucleophile. A glycan (N-linked (GlcNAc...) asparagine; by host) is linked at Asn-131. The interval Asn-138–Met-297 is N-acetyl-9-O-acetylneuraminic acid binding. Positions Pro-298–Ala-352 are esterase domain-2. Catalysis depends on charge relay system residues Asp-353 and His-356. Positions Asp-353–Ile-638 are fusion domain-2. The N-linked (GlcNAc...) asparagine; by host glycan is linked to Asn-382. A helical transmembrane segment spans residues Leu-618–Ile-638. Residues Cys-639–Lys-642 lie on the Cytoplasmic side of the membrane.

This sequence belongs to the influenza type C/coronaviruses hemagglutinin-esterase family. Homotrimer of disulfide-linked HEF1-HEF2. In terms of processing, in natural infection, inactive HEF is matured into HEF1 and HEF2 outside the cell by one or more trypsin-like, arginine-specific endoprotease.

The protein localises to the virion membrane. It is found in the host cell membrane. The enzyme catalyses N-acetyl-9-O-acetylneuraminate + H2O = N-acetylneuraminate + acetate + H(+). It catalyses the reaction N-acetyl-4-O-acetylneuraminate + H2O = N-acetylneuraminate + acetate + H(+). Binds to the N-acetyl-9-O-acetylneuraminic acid residues on the cell surface, bringing about the attachment of the virus particle to the cell. Plays a major role in the determination of host range restriction and virulence. Class I viral fusion protein. Responsible for penetration of the virus into the cell cytoplasm by mediating the fusion of the membrane of the endocytosed virus particle with the endosomal membrane. Low pH in endosomes induce an irreversible conformational change in HEF2, releasing the fusion hydrophobic peptide. Several trimers are required to form a competent fusion pore. Displays a receptor-destroying activity which is a neuraminidate-O-acetyl esterase. This activity cleaves off any receptor on the cell surface, which would otherwise prevent virions release. These cleavages prevent self-aggregation and ensure the efficient spread of the progeny virus from cell to cell. In Influenza C virus (strain C/Great lakes/1167/1954), this protein is Hemagglutinin-esterase-fusion glycoprotein (HE).